The sequence spans 427 residues: Adenylosuccinate synthetase (427 aa).

GTP-binding positions include 12–18 (GDEGKGK) and 40–42 (GHT). Residue Asp-13 is the Proton acceptor of the active site. Mg(2+)-binding residues include Asp-13 and Gly-40. IMP contacts are provided by residues 13 to 16 (DEGK), 38 to 41 (NAGH), Thr-128, Arg-142, Gln-223, Thr-238, and Arg-302. The Proton donor role is filled by His-41. 298–304 (TVTGRAR) contributes to the substrate binding site. GTP contacts are provided by residues Arg-304, 330-332 (RLD), and 412-414 (SVG).

This sequence belongs to the adenylosuccinate synthetase family. In terms of assembly, homodimer. Mg(2+) is required as a cofactor.

It localises to the cytoplasm. The catalysed reaction is IMP + L-aspartate + GTP = N(6)-(1,2-dicarboxyethyl)-AMP + GDP + phosphate + 2 H(+). Its pathway is purine metabolism; AMP biosynthesis via de novo pathway; AMP from IMP: step 1/2. Its function is as follows. Plays an important role in the de novo pathway of purine nucleotide biosynthesis. Catalyzes the first committed step in the biosynthesis of AMP from IMP. This is Adenylosuccinate synthetase from Brachyspira hyodysenteriae (strain ATCC 49526 / WA1).